A 366-amino-acid chain; its full sequence is tRNA/tmRNA (uracil-C(5))-methyltransferase (366 aa).

S-adenosyl-L-methionine-binding residues include Q190, Y218, N223, E239, and D299. Catalysis depends on C324, which acts as the Nucleophile. Catalysis depends on E358, which acts as the Proton acceptor.

Belongs to the class I-like SAM-binding methyltransferase superfamily. RNA M5U methyltransferase family. TrmA subfamily.

It catalyses the reaction uridine(54) in tRNA + S-adenosyl-L-methionine = 5-methyluridine(54) in tRNA + S-adenosyl-L-homocysteine + H(+). The catalysed reaction is uridine(341) in tmRNA + S-adenosyl-L-methionine = 5-methyluridine(341) in tmRNA + S-adenosyl-L-homocysteine + H(+). Functionally, dual-specificity methyltransferase that catalyzes the formation of 5-methyluridine at position 54 (m5U54) in all tRNAs, and that of position 341 (m5U341) in tmRNA (transfer-mRNA). The chain is tRNA/tmRNA (uracil-C(5))-methyltransferase from Citrobacter koseri (strain ATCC BAA-895 / CDC 4225-83 / SGSC4696).